Reading from the N-terminus, the 433-residue chain is Histidinol dehydrogenase (433 aa).

Positions 129, 191, and 214 each coordinate NAD(+). Substrate is bound by residues serine 237, glutamine 259, and histidine 262. Zn(2+)-binding residues include glutamine 259 and histidine 262. Catalysis depends on proton acceptor residues glutamate 326 and histidine 327. Residues histidine 327, aspartate 360, glutamate 414, and histidine 419 each contribute to the substrate site. Residue aspartate 360 participates in Zn(2+) binding. Histidine 419 contributes to the Zn(2+) binding site.

It belongs to the histidinol dehydrogenase family. Requires Zn(2+) as cofactor.

The enzyme catalyses L-histidinol + 2 NAD(+) + H2O = L-histidine + 2 NADH + 3 H(+). Its pathway is amino-acid biosynthesis; L-histidine biosynthesis; L-histidine from 5-phospho-alpha-D-ribose 1-diphosphate: step 9/9. Catalyzes the sequential NAD-dependent oxidations of L-histidinol to L-histidinaldehyde and then to L-histidine. The sequence is that of Histidinol dehydrogenase from Methanosarcina mazei (strain ATCC BAA-159 / DSM 3647 / Goe1 / Go1 / JCM 11833 / OCM 88) (Methanosarcina frisia).